The primary structure comprises 1057 residues: MPKNKDINTILVIGSGPIIIGQAAEFDYAGTQACLALKEEGYKVILVNSNPATIMTDKEIADKVYIEPLTHDFIARIIRKEQPDALLPTLGGQTGLNMAIQLHDSGVLESNNVQLLGTKLSSIQQAEDRELFRSLMNELDVPVPESDIVNTVEQAFAFKEQVGYPLIVRPAFTMGGTGGGICHNDEELKEVVTNGLHYSPATQCLIEKSIAGFKEIEYEVMRDKNDNAIVVCNMENIDPVGIHTGDSVVVAPSQTLTDVEYQMLRDVSLKVIRALGIEGGCNVQLALDPHSMNYYIIEVNPRVSRSSALASKATGYPIAKLAAKIAVGLTLDEMLNPVTGTSYAAFEPALDYVISKIPRFPFDKFEKGERVLGTQMKATGEVMAIGRTYEESLLKAIRSLEYGVHHLGLPNGESYDLDYIKERILQQDDERLFFIGEAIRRGTTLEEIHEMTQIDYFFLNKFQHIIDIEHELKDHKGDIEYLKYAKDYGFSDKVIAHRFDMTEDEVNQLRKTNDIKPVYKMVDTCAAEFESSTPYYYGTYERDNESVVTDKEKVIVLGSGPIRIGQGVEFDYATVHAVWAIQNAGYEAIIVNNNPETVSTDFSISDKLYFEPLTVEDVMNIIDLEQPKGVVVQFGGQTAINLAEKLAEKGVQILGTSLENLNRAEDRKEFEALLNKIDVPQPKGKTATSPEEALENAREIGYPVVVRPSYVLGGRAMEIVYNDAELGNYIREAVKASPEHPVLVDRYLTGKEIEVDAICDGDTVIIPGIMEHIERAGVHSGDSIAVYPPQTLSEEDIKTLESYTTKLAKGLDIIGLINIQFVLAHDGVYVLEVNPRSSRTVPFLSKITNIPMAQLAMRAILGEKLSDLGYQPGLQPYTEGVFVKAPVFSFNKLKNVDITLGPEMKSTGEVMGKDLTLEKALFKGLTASGVEVKDHGTVLITVSDKDKDEMVKVAKRLNEVGYKILATEGTAQKLADNHIPVETVGKIGGEDDLLTRIQNGEVQIVINTMTKGKTIERDGFQIRRASVENGVPCLTSLDTANALTNVIESMSFTMKQM.

Positions 1–401 are carboxyphosphate synthetic domain; the sequence is MPKNKDINTI…SLLKAIRSLE (401 aa). Arg-129, Arg-169, Gly-175, Gly-176, Lys-208, Ile-210, Glu-215, Gly-241, Ile-242, His-243, Gln-284, and Glu-298 together coordinate ATP. An ATP-grasp 1 domain is found at 133–327; sequence RSLMNELDVP…IAKLAAKIAV (195 aa). Mg(2+)-binding residues include Gln-284, Glu-298, and Asn-300. Residues Gln-284, Glu-298, and Asn-300 each coordinate Mn(2+). The segment at 402 to 546 is oligomerization domain; it reads YGVHHLGLPN…YGTYERDNES (145 aa). A carbamoyl phosphate synthetic domain region spans residues 547-929; that stretch reads VVTDKEKVIV…ALFKGLTASG (383 aa). The 191-residue stretch at 671-861 folds into the ATP-grasp 2 domain; sequence EALLNKIDVP…MAQLAMRAIL (191 aa). Residues Arg-707, Arg-746, Leu-748, Glu-752, Gly-777, Val-778, His-779, Ser-780, Gln-820, and Glu-832 each coordinate ATP. Residues Gln-820, Glu-832, and Asn-834 each contribute to the Mg(2+) site. Positions 820, 832, and 834 each coordinate Mn(2+). In terms of domain architecture, MGS-like spans 930 to 1057; that stretch reads VEVKDHGTVL…ESMSFTMKQM (128 aa). The segment at 930–1057 is allosteric domain; it reads VEVKDHGTVL…ESMSFTMKQM (128 aa).

This sequence belongs to the CarB family. As to quaternary structure, composed of two chains; the small (or glutamine) chain promotes the hydrolysis of glutamine to ammonia, which is used by the large (or ammonia) chain to synthesize carbamoyl phosphate. Tetramer of heterodimers (alpha,beta)4. Mg(2+) serves as cofactor. It depends on Mn(2+) as a cofactor.

It carries out the reaction hydrogencarbonate + L-glutamine + 2 ATP + H2O = carbamoyl phosphate + L-glutamate + 2 ADP + phosphate + 2 H(+). The catalysed reaction is hydrogencarbonate + NH4(+) + 2 ATP = carbamoyl phosphate + 2 ADP + phosphate + 2 H(+). It functions in the pathway amino-acid biosynthesis; L-arginine biosynthesis; carbamoyl phosphate from bicarbonate: step 1/1. The protein operates within pyrimidine metabolism; UMP biosynthesis via de novo pathway; (S)-dihydroorotate from bicarbonate: step 1/3. Large subunit of the glutamine-dependent carbamoyl phosphate synthetase (CPSase). CPSase catalyzes the formation of carbamoyl phosphate from the ammonia moiety of glutamine, carbonate, and phosphate donated by ATP, constituting the first step of 2 biosynthetic pathways, one leading to arginine and/or urea and the other to pyrimidine nucleotides. The large subunit (synthetase) binds the substrates ammonia (free or transferred from glutamine from the small subunit), hydrogencarbonate and ATP and carries out an ATP-coupled ligase reaction, activating hydrogencarbonate by forming carboxy phosphate which reacts with ammonia to form carbamoyl phosphate. The polypeptide is Carbamoyl phosphate synthase large chain (Staphylococcus carnosus (strain TM300)).